The following is a 2061-amino-acid chain: Myoferlin (2061 aa).

The region spanning 1–101 (MLRVIVESAS…TGDQSRSLPY (101 aa)) is the C2 1 domain. At 1 to 2025 (MLRVIVESAS…MKFIVWRRFK (2025 aa)) the chain is on the cytoplasmic side. The segment at 123-172 (GYDPPSAPHPNDLSGPSVPGMGGDGEEDEGDEDRLDNAVRGPGPKGPVGT) is disordered. Positions 146–156 (DGEEDEGDEDR) are enriched in acidic residues. Position 174 is a phosphoserine (Ser174). 2 C2 domains span residues 181–300 (RLTK…RKWL) and 339–474 (DSDD…VEDF). The tract at residues 186 to 281 (KNSRRMLSNK…RADCLMGEFK (96 aa)) is necessary for interaction with EHD2. Residues 323 to 342 (LGTGDEPPPERRDRDNDSDD) are disordered. Ca(2+) contacts are provided by Asp390, Asp396, Asp444, Asp446, and Asp452. Residue Lys553 is modified to N6-acetyllysine. The residue at position 729 (Ser729) is a Phosphoserine. Residue Lys884 is modified to N6-acetyllysine. The interval 938–967 (ESRYPGGDWKPAEDTYTDANGDKAASPSEL) is disordered. 2 consecutive C2 domains span residues 1123 to 1251 (GANT…LLWH) and 1282 to 1410 (LPPQ…GKED). Ca(2+)-binding residues include Asp1155, Asp1161, Asp1217, and Asp1219. Residue Lys1507 is modified to N6-acetyllysine. C2 domains are found at residues 1536–1654 (PAPP…SHCG) and 1772–1920 (GPPG…EKCR). 7 residues coordinate Ca(2+): Asp1569, Asp1575, Asp1624, Asp1626, Asp1891, Ser1894, and Asp1897. Ser1915 carries the post-translational modification Phosphoserine. Residues 2026–2046 (WVIIGLLFLLILLLFVAVLLY) form a helical membrane-spanning segment. The Extracellular portion of the chain corresponds to 2047–2061 (SLPNYLSMKIVKPNV).

It belongs to the ferlin family. In terms of assembly, interacts with DNM2 and KDR. Interacts with EHD1. Interacts with EHD2; the interaction is direct. Interacts with RIPOR2. It depends on Ca(2+) as a cofactor. In terms of tissue distribution, expressed in myoblast and endothelial cells (at protein level). Highly expressed in cardiac and skeletal muscles. Also present in lung, and at very low levels in kidney, placenta and brain.

It is found in the cell membrane. Its subcellular location is the nucleus membrane. The protein resides in the cytoplasmic vesicle membrane. Calcium/phospholipid-binding protein that plays a role in the plasmalemma repair mechanism of endothelial cells that permits rapid resealing of membranes disrupted by mechanical stress. Involved in endocytic recycling. Implicated in VEGF signal transduction by regulating the levels of the receptor KDR. The chain is Myoferlin (MYOF) from Homo sapiens (Human).